Reading from the N-terminus, the 259-residue chain is Global transcriptional regulator CodY (259 aa).

The interval 1-155 (MSLLSRMRKI…GATVVGMEIL (155 aa)) is GAF domain. The H-T-H motif DNA-binding region spans 203–222 (ASKIADRVGITRSVIVNALR). Ser215 is subject to Phosphoserine.

It belongs to the CodY family.

It is found in the cytoplasm. Its function is as follows. DNA-binding global transcriptional regulator which is involved in the adaptive response to starvation and acts by directly or indirectly controlling the expression of numerous genes in response to nutrient availability. During rapid exponential growth, CodY is highly active and represses genes whose products allow adaptation to nutrient depletion. This chain is Global transcriptional regulator CodY, found in Halalkalibacterium halodurans (strain ATCC BAA-125 / DSM 18197 / FERM 7344 / JCM 9153 / C-125) (Bacillus halodurans).